The chain runs to 261 residues: 5'-nucleotidase SurE (261 aa).

Aspartate 12, aspartate 13, serine 43, and asparagine 99 together coordinate a divalent metal cation.

Belongs to the SurE nucleotidase family. The cofactor is a divalent metal cation.

The protein resides in the cytoplasm. The catalysed reaction is a ribonucleoside 5'-phosphate + H2O = a ribonucleoside + phosphate. In terms of biological role, nucleotidase that shows phosphatase activity on nucleoside 5'-monophosphates. The polypeptide is 5'-nucleotidase SurE (Polynucleobacter asymbioticus (strain DSM 18221 / CIP 109841 / QLW-P1DMWA-1) (Polynucleobacter necessarius subsp. asymbioticus)).